Consider the following 150-residue polypeptide: 3-dehydroquinate dehydratase (150 aa).

Tyr-23 (proton acceptor) is an active-site residue. The substrate site is built by Asn-75, His-81, and Asp-88. The active-site Proton donor is His-101. Residues 102-103 and Arg-112 each bind substrate; that span reads LS.

The protein belongs to the type-II 3-dehydroquinase family. As to quaternary structure, homododecamer.

The enzyme catalyses 3-dehydroquinate = 3-dehydroshikimate + H2O. It participates in metabolic intermediate biosynthesis; chorismate biosynthesis; chorismate from D-erythrose 4-phosphate and phosphoenolpyruvate: step 3/7. Functionally, catalyzes a trans-dehydration via an enolate intermediate. This chain is 3-dehydroquinate dehydratase, found in Pseudomonas savastanoi pv. phaseolicola (strain 1448A / Race 6) (Pseudomonas syringae pv. phaseolicola (strain 1448A / Race 6)).